The sequence spans 188 residues: Dual specificity protein phosphatase 18 (188 aa).

The Tyrosine-protein phosphatase domain occupies 19-160; that stretch reads GLSQITKSLY…LIHYEFQLFG (142 aa). Positions 95 to 141 are sufficient for mitochondrial localization; the sequence is MKQGRTLLHCAAGVSRSAALCLAYLMKYHAMSLLDAHTWTKSCRPII. Cysteine 104 serves as the catalytic Phosphocysteine intermediate.

Belongs to the protein-tyrosine phosphatase family. Non-receptor class dual specificity subfamily.

It is found in the cytoplasm. The protein resides in the nucleus. It localises to the mitochondrion inner membrane. It catalyses the reaction O-phospho-L-tyrosyl-[protein] + H2O = L-tyrosyl-[protein] + phosphate. The enzyme catalyses O-phospho-L-seryl-[protein] + H2O = L-seryl-[protein] + phosphate. It carries out the reaction O-phospho-L-threonyl-[protein] + H2O = L-threonyl-[protein] + phosphate. Functionally, can dephosphorylate single and diphosphorylated synthetic MAPK peptides, with preference for the phosphotyrosine and diphosphorylated forms over phosphothreonine. In vitro, dephosphorylates p-nitrophenyl phosphate (pNPP). This chain is Dual specificity protein phosphatase 18 (DUSP18), found in Pongo abelii (Sumatran orangutan).